Reading from the N-terminus, the 514-residue chain is Peptide chain release factor 3 (514 aa).

One can recognise a tr-type G domain in the interval 8–268; it reads KKRRTFAIIS…TFLEFAPEPH (261 aa). GTP is bound by residues 17-24, 85-89, and 139-142; these read SHPDAGKT, DTPGH, and NKLD.

It belongs to the TRAFAC class translation factor GTPase superfamily. Classic translation factor GTPase family. PrfC subfamily.

The protein localises to the cytoplasm. Functionally, increases the formation of ribosomal termination complexes and stimulates activities of RF-1 and RF-2. It binds guanine nucleotides and has strong preference for UGA stop codons. It may interact directly with the ribosome. The stimulation of RF-1 and RF-2 is significantly reduced by GTP and GDP, but not by GMP. The protein is Peptide chain release factor 3 of Streptococcus pyogenes serotype M18 (strain MGAS8232).